We begin with the raw amino-acid sequence, 730 residues long: ATP-binding cassette sub-family D member 1 (730 aa).

Helical transmembrane passes span 24 to 44, 137 to 157, 169 to 189, and 276 to 296; these read AFSY…VTIP, FCLI…GALV, ALVL…NSMI, and ANII…AHIL. One can recognise an ABC transmembrane type-1 domain in the interval 136–373; that stretch reads TFCLISRTFL…WFIMLEQFFM (238 aa). The ABC transporter domain occupies 505 to 727; that stretch reads ISLRAVPVVT…MNSDEEQKGQ (223 aa). Position 538–545 (538–545) interacts with ATP; the sequence is GPNGCGKS.

Belongs to the ABC transporter superfamily. ABCD family. Peroxisomal fatty acyl CoA transporter (TC 3.A.1.203) subfamily.

The protein resides in the peroxisome membrane. The catalysed reaction is an acyl-CoA(out) + ATP + H2O = an acyl-CoA(in) + ADP + phosphate + H(+). Functionally, plays a role in the transport of free very-long-chain fatty acids (VLCFAs) as well as their CoA-esters across the peroxisomal membrane by acting as an ATP-specific binding subunit releasing ADP after ATP hydrolysis. Thus, plays a role in regulation of VLCFAs and energy metabolism namely, in the degradation and biosynthesis of fatty acids by beta-oxidation, mitochondrial function and microsomal fatty acid elongation. The sequence is that of ATP-binding cassette sub-family D member 1 from Drosophila melanogaster (Fruit fly).